Here is a 647-residue protein sequence, read N- to C-terminus: UvrABC system protein C (647 aa).

One can recognise a GIY-YIG domain in the interval 26-106 (SEPGCYLMRD…IKEHQPYFNI (81 aa)). A UVR domain is found at 216–251 (DQLKDLLHKQMLIQSKLQEFEKAAIIRDQIKGIEQL).

Belongs to the UvrC family. In terms of assembly, interacts with UvrB in an incision complex.

The protein localises to the cytoplasm. Functionally, the UvrABC repair system catalyzes the recognition and processing of DNA lesions. UvrC both incises the 5' and 3' sides of the lesion. The N-terminal half is responsible for the 3' incision and the C-terminal half is responsible for the 5' incision. The chain is UvrABC system protein C from Prochlorococcus marinus (strain MIT 9211).